The following is a 542-amino-acid chain: Chaperonin GroEL 3 (542 aa).

ATP contacts are provided by residues 30–33 (TLGP), Lys51, 87–91 (DGTTT), Gly415, and Asp496.

This sequence belongs to the chaperonin (HSP60) family. In terms of assembly, forms a cylinder of 14 subunits composed of two heptameric rings stacked back-to-back. Interacts with the co-chaperonin GroES.

The protein localises to the cytoplasm. The enzyme catalyses ATP + H2O + a folded polypeptide = ADP + phosphate + an unfolded polypeptide.. Together with its co-chaperonin GroES, plays an essential role in assisting protein folding. The GroEL-GroES system forms a nano-cage that allows encapsulation of the non-native substrate proteins and provides a physical environment optimized to promote and accelerate protein folding. The protein is Chaperonin GroEL 3 of Sinorhizobium medicae (strain WSM419) (Ensifer medicae).